The following is a 721-amino-acid chain: Teichoic acid poly(glycerol phosphate) polymerase (721 aa).

CDP-glycerol is bound by residues Trp443–Pro447, Arg511, Pro545–Thr546, Arg582–His584, Ser624–Ser625, and Asp629.

Belongs to the CDP-glycerol glycerophosphotransferase family.

It localises to the cell membrane. It carries out the reaction 4-O-[(2R)-glycerylphospho]-N-acetyl-beta-D-mannosaminyl-(1-&gt;4)-N-acetyl-alpha-D-glucosaminyl di-trans,octa-cis-undecaprenyl diphosphate + n CDP-glycerol = 4-O-{[(2R)-1-glycerylphospho](n)-(2R)-1-glycerylphospho}-N-acetyl-beta-D-mannosaminyl-(1-&gt;4)-N-acetyl-alpha-D-glucosaminyl undecaprenyl diphosphate + n CMP + n H(+). The protein operates within cell wall biogenesis; poly(glycerol phosphate) teichoic acid biosynthesis. In terms of biological role, responsible for the polymerization of the main chain of the major teichoic acid by sequential transfer of glycerol phosphate units from CDP-glycerol to the disaccharide linkage unit. Synthesizes polymers of approximately 35 glycerol phosphate units in length. The polypeptide is Teichoic acid poly(glycerol phosphate) polymerase (Staphylococcus epidermidis (strain ATCC 35984 / DSM 28319 / BCRC 17069 / CCUG 31568 / BM 3577 / RP62A)).